The primary structure comprises 535 residues: Peptide chain release factor 3 (535 aa).

One can recognise a tr-type G domain in the interval 8–278 (ARRRTFAIIS…VDQAPAPGPR (271 aa)). GTP is bound by residues 17-24 (SHPDAGKT), 85-89 (DTPGH), and 139-142 (NKLD).

Belongs to the TRAFAC class translation factor GTPase superfamily. Classic translation factor GTPase family. PrfC subfamily.

Its subcellular location is the cytoplasm. Increases the formation of ribosomal termination complexes and stimulates activities of RF-1 and RF-2. It binds guanine nucleotides and has strong preference for UGA stop codons. It may interact directly with the ribosome. The stimulation of RF-1 and RF-2 is significantly reduced by GTP and GDP, but not by GMP. The protein is Peptide chain release factor 3 of Bordetella bronchiseptica (strain ATCC BAA-588 / NCTC 13252 / RB50) (Alcaligenes bronchisepticus).